The chain runs to 962 residues: Glycine dehydrogenase (decarboxylating) (962 aa).

Lys-709 carries the N6-(pyridoxal phosphate)lysine modification.

This sequence belongs to the GcvP family. The glycine cleavage system is composed of four proteins: P, T, L and H. The cofactor is pyridoxal 5'-phosphate.

It carries out the reaction N(6)-[(R)-lipoyl]-L-lysyl-[glycine-cleavage complex H protein] + glycine + H(+) = N(6)-[(R)-S(8)-aminomethyldihydrolipoyl]-L-lysyl-[glycine-cleavage complex H protein] + CO2. Its function is as follows. The glycine cleavage system catalyzes the degradation of glycine. The P protein binds the alpha-amino group of glycine through its pyridoxal phosphate cofactor; CO(2) is released and the remaining methylamine moiety is then transferred to the lipoamide cofactor of the H protein. The protein is Glycine dehydrogenase (decarboxylating) of Shewanella baltica (strain OS155 / ATCC BAA-1091).